A 527-amino-acid chain; its full sequence is ARS-binding protein 2 (527 aa).

Disordered regions lie at residues 160–184 (PDVN…HSAS), 219–265 (SHHM…NSHN), and 282–344 (IDPD…IKRL). Low complexity predominate over residues 164 to 177 (SSSISTMRTSTSPS). Over residues 225–239 (RGSQQAHQTTPQNHS) the composition is skewed to polar residues. Basic and acidic residues predominate over residues 284-303 (PDWHQWPDDLRDVSSPKESD). A phosphoserine mark is found at Ser-297, Ser-298, and Ser-302. Residues 328-343 (PRKRGRPPGARNKIKR) show a composition bias toward basic residues.

It localises to the nucleus. Functionally, binds, preferentially, to the Maundrell ARS consensus sequence within ARS3002. The chain is ARS-binding protein 2 (abp2) from Schizosaccharomyces pombe (strain 972 / ATCC 24843) (Fission yeast).